Here is a 633-residue protein sequence, read N- to C-terminus: Proline-rich receptor-like protein kinase PERK4 (633 aa).

The segment covering 1–29 has biased composition (low complexity); that stretch reads MASSPESAPPTNSTSSPSPPSNTNSTTSS. Residues 1–145 are disordered; it reads MASSPESAPP…GSSGGGGGGR (145 aa). Residues 1 to 151 lie on the Extracellular side of the membrane; sequence MASSPESAPP…GGGRSNTNTA (151 aa). 2 N-linked (GlcNAc...) asparagine glycosylation sites follow: Asn-12 and Asn-24. 2 stretches are compositionally biased toward pro residues: residues 30–41 and 48–65; these read PPAPSPPSPTPP and SPPP…PNPP. The N-linked (GlcNAc...) asparagine glycan is linked to Asn-66. Positions 77–90 are enriched in gly residues; sequence QGGGGERGNGGNNG. Low complexity predominate over residues 106–135; sequence SRSNGDNGGSRSSPPGDTGGSRSDNPPSSG. Over residues 136-145 the composition is skewed to gly residues; sequence GSSGGGGGGR. The chain crosses the membrane as a helical span at residues 152–172; the sequence is IIVGVLVGAGLLMIVLIIVCL. The Cytoplasmic segment spans residues 173-633; it reads RRKKKRKDSF…MGTKSPTPPK (461 aa). A compositionally biased stretch (low complexity) spans 193 to 222; the sequence is QYYGNNNNNNASQNYPNWHLNSQGQNQQST. Positions 193-255 are disordered; sequence QYYGNNNNNN…SMYSGPSRPV (63 aa). A Phosphothreonine modification is found at Thr-273. Residues 284–562 form the Protein kinase domain; sequence FTDANLLGQG…VRALEGEVSL (279 aa). ATP contacts are provided by residues 290-298 and Lys-312; that span reads LGQGGFGYV. Tyr-357 bears the Phosphotyrosine mark. Asp-408 (proton acceptor) is an active-site residue. Phosphoserine is present on Ser-441. Phosphothreonine is present on residues Thr-442 and Thr-447. Tyr-455 carries the phosphotyrosine modification. The segment covering 608–619 has biased composition (polar residues); that stretch reads FPVSDCEGTSSN. The segment at 608-633 is disordered; the sequence is FPVSDCEGTSSNDSRDMGTKSPTPPK.

Belongs to the protein kinase superfamily. Ser/Thr protein kinase family. As to expression, mostly expressed in inflorescence bolts. Also present in roots, stems, germinated seeds, cotyledons, pollen, stamen and stigma.

It is found in the cell membrane. The enzyme catalyses L-seryl-[protein] + ATP = O-phospho-L-seryl-[protein] + ADP + H(+). It catalyses the reaction L-threonyl-[protein] + ATP = O-phospho-L-threonyl-[protein] + ADP + H(+). Activated by ABA and Ca(2+). Functionally, required during abscisic acid (ABA)-mediated activation of Ca(2+) channels. Regulates ABA signaling pathways. Modulates the expression of genes related to cell elongation and ABA signaling during root growth. This is Proline-rich receptor-like protein kinase PERK4 (PERK4) from Arabidopsis thaliana (Mouse-ear cress).